The primary structure comprises 518 residues: Xylose import ATP-binding protein XylG (518 aa).

ABC transporter domains lie at 6 to 245 and 262 to 507; these read LQMN…VGRE and FEAR…LSQP. 38–45 contacts ATP; sequence GENGAGKS.

It belongs to the ABC transporter superfamily. Xylose importer (TC 3.A.1.2.4) family. As to quaternary structure, the complex is composed of two ATP-binding proteins (XylG), two transmembrane proteins (XylH) and a solute-binding protein (XylF).

The protein resides in the cell inner membrane. It carries out the reaction D-xylose(out) + ATP + H2O = D-xylose(in) + ADP + phosphate + H(+). Its function is as follows. Part of the ABC transporter complex XylFGH involved in xylose import. Responsible for energy coupling to the transport system. This is Xylose import ATP-binding protein XylG from Pseudomonas fluorescens (strain Pf0-1).